Consider the following 116-residue polypeptide: Carbohydrate-binding protein AQN-3 (116 aa).

Cys-9 and Cys-30 are joined by a disulfide. Residues 9-110 enclose the CUB domain; the sequence is CGGFLKNYSG…SSFNVYFYGI (102 aa). N-linked (GlcNAc...) asparagine glycosylation is present at Asn-50. Cys-53 and Cys-74 are oxidised to a cystine. At His-85 the chain carries Methylhistidine.

It belongs to the spermadhesin family. The residue at position 85 was identified as a methylhistidine by mass spectrometry.

It is found in the secreted. Its function is as follows. AQN proteins mediate the binding of boar spermatozoa to component(s) of the egg's zona pellucida by a carbohydrate-binding mechanism. AQN proteins are secretory components of the male accessory glands being coated to the sperm surface at the time of ejaculation. They possess as well heparin-, serine-protease-inhibitor-binding capability. In Sus scrofa (Pig), this protein is Carbohydrate-binding protein AQN-3.